The chain runs to 195 residues: COMM domain-containing protein 3 (195 aa).

A COMM domain is found at 124–193 (HITDVSWRLE…DASKSLERAT (70 aa)).

It belongs to the COMM domain-containing protein 3 family. As to quaternary structure, component of the commander complex consisting of the CCC subcomplex and the retriever subcomplex. Component of the CCC (COMMD/CCDC22/CCDC93) subcomplex consisting of COMMD1, COMMD2, COMMD3, COMMD4, COMMD5, COMMD6, COMMD7, COMMD8, COMMD9, COMMD10, CCDC22 and CCDC93; within the complex forms a heterodimer with COMMD2. Interacts with NFKB1/p105. Interacts with CCDC22, CCDC93, SCNN1B, CUL3, CUL4A, CUL4B, CUL5.

The protein resides in the cytoplasm. It localises to the nucleus. Its function is as follows. Scaffold protein in the commander complex that is essential for endosomal recycling of transmembrane cargos; the commander complex is composed of the CCC subcomplex and the retriever subcomplex. May modulate activity of cullin-RING E3 ubiquitin ligase (CRL) complexes. May down-regulate activation of NF-kappa-B. Modulates Na(+) transport in epithelial cells by regulation of apical cell surface expression of amiloride-sensitive sodium channel (ENaC) subunits. This chain is COMM domain-containing protein 3 (COMMD3), found in Bos taurus (Bovine).